The sequence spans 472 residues: Tubulin gamma chain (472 aa).

142 to 148 (AGGTGSG) is a GTP binding site.

This sequence belongs to the tubulin family.

It is found in the cytoplasm. The protein localises to the cytoskeleton. It localises to the microtubule organizing center. Functionally, tubulin is the major constituent of microtubules. The gamma chain is found at microtubule organizing centers (MTOC) such as the spindle poles, suggesting that it is involved in the minus-end nucleation of microtubule assembly. The chain is Tubulin gamma chain (TUBG) from Anemia phyllitidis (Fern).